Consider the following 620-residue polypeptide: 1-deoxy-D-xylulose-5-phosphate synthase (620 aa).

Thiamine diphosphate-binding positions include H75 and 116-118 (AHS). D147 is a Mg(2+) binding site. Thiamine diphosphate is bound by residues 148 to 149 (GA), N177, Y284, and E366. Position 177 (N177) interacts with Mg(2+).

It belongs to the transketolase family. DXPS subfamily. In terms of assembly, homodimer. Mg(2+) is required as a cofactor. The cofactor is thiamine diphosphate.

It catalyses the reaction D-glyceraldehyde 3-phosphate + pyruvate + H(+) = 1-deoxy-D-xylulose 5-phosphate + CO2. Its pathway is metabolic intermediate biosynthesis; 1-deoxy-D-xylulose 5-phosphate biosynthesis; 1-deoxy-D-xylulose 5-phosphate from D-glyceraldehyde 3-phosphate and pyruvate: step 1/1. Its function is as follows. Catalyzes the acyloin condensation reaction between C atoms 2 and 3 of pyruvate and glyceraldehyde 3-phosphate to yield 1-deoxy-D-xylulose-5-phosphate (DXP). The chain is 1-deoxy-D-xylulose-5-phosphate synthase from Bordetella pertussis (strain Tohama I / ATCC BAA-589 / NCTC 13251).